Consider the following 409-residue polypeptide: Proteasome-activating nucleotidase (409 aa).

The disordered stretch occupies residues 1-22 (MTLSSAGGSRSHRHNGGHSERD). A coiled-coil region spans residues 23–58 (VEIRILKDKVRSLTKEKISLQKELEYYKNEITKLLS). ATP contacts are provided by residues 183 to 188 (GTGKTL) and histidine 322.

The protein belongs to the AAA ATPase family. In terms of assembly, homohexamer. The hexameric complex has a two-ring architecture resembling a top hat that caps the 20S proteasome core at one or both ends. Upon ATP-binding, the C-terminus of PAN interacts with the alpha-rings of the proteasome core by binding to the intersubunit pockets.

The protein localises to the cytoplasm. ATPase which is responsible for recognizing, binding, unfolding and translocation of substrate proteins into the archaeal 20S proteasome core particle. Is essential for opening the gate of the 20S proteasome via an interaction with its C-terminus, thereby allowing substrate entry and access to the site of proteolysis. Thus, the C-termini of the proteasomal ATPase function like a 'key in a lock' to induce gate opening and therefore regulate proteolysis. Unfolding activity requires energy from ATP hydrolysis, whereas ATP binding alone promotes ATPase-20S proteasome association which triggers gate opening, and supports translocation of unfolded substrates. The protein is Proteasome-activating nucleotidase of Aeropyrum pernix (strain ATCC 700893 / DSM 11879 / JCM 9820 / NBRC 100138 / K1).